We begin with the raw amino-acid sequence, 636 residues long: DNA-directed RNA polymerase subunit beta' (636 aa).

Residues Cys70, Cys72, Cys85, and Cys88 each coordinate Zn(2+). Mg(2+) is bound by residues Asp471, Asp473, and Asp475.

This sequence belongs to the RNA polymerase beta' chain family. RpoC1 subfamily. Mg(2+) serves as cofactor. Requires Zn(2+) as cofactor.

The protein resides in the plastid. Its subcellular location is the cyanelle. The enzyme catalyses RNA(n) + a ribonucleoside 5'-triphosphate = RNA(n+1) + diphosphate. In terms of biological role, DNA-dependent RNA polymerase catalyzes the transcription of DNA into RNA using the four ribonucleoside triphosphates as substrates. This Cyanophora paradoxa protein is DNA-directed RNA polymerase subunit beta'.